An 883-amino-acid polypeptide reads, in one-letter code: Envelope glycoprotein B (883 aa).

The first 31 residues, 1–31 (MQSYIAVNIDMASLKMLICVCVAILIPSTLS), serve as a signal peptide directing secretion. Residues 32-750 (QDSHGIAGII…SGIASFLSNP (719 aa)) are Virion surface-facing. Intrachain disulfides connect Cys77/Cys535, Cys94/Cys491, Cys167/Cys229, Cys321/Cys369, and Cys558/Cys608. Asn102 and Asn121 each carry an N-linked (GlcNAc...) asparagine; by host glycan. The involved in fusion and/or binding to host membrane stretch occupies residues 134–140 (TWALFSR). An N-linked (GlcNAc...) asparagine; by host glycan is attached at Asn211. An involved in fusion and/or binding to host membrane region spans residues 216–223 (HQTLGYRT). 2 N-linked (GlcNAc...) asparagine; by host glycosylation sites follow: Asn262 and Asn360. The segment at 428–457 (QNHLPRGRERRQAAGRRTASLQSGPQGDRI) is disordered. N-linked (GlcNAc...) asparagine; by host glycosylation is found at Asn579, Asn635, and Asn649. Hydrophobic membrane proximal region stretches follow at residues 694–748 (IDTV…SFLS) and 724–744 (ALGT…SGIA). Residues 751-771 (FAALGIGIAVVVSIILGLLAF) form a helical membrane-spanning segment. The Intravirion portion of the chain corresponds to 772–883 (KYVMNLKSNP…PSWAEESEDE (112 aa)). The tract at residues 791-817 (PPAGTPPRPSRRYYKDEEEVEEDSDED) is disordered. The span at 806-817 (DEEEVEEDSDED) shows a compositional bias: acidic residues. An Internalization motif motif is present at residues 868 to 871 (YPLL).

The protein belongs to the herpesviridae glycoprotein B family. As to quaternary structure, homotrimer; disulfide-linked. Binds to heparan sulfate proteoglycans. Interacts with gH/gL heterodimer. A proteolytic cleavage by host furin generates two subunits that remain linked by disulfide bonds.

The protein localises to the virion membrane. It is found in the host cell membrane. Its subcellular location is the host endosome membrane. It localises to the host Golgi apparatus membrane. Its function is as follows. Envelope glycoprotein that forms spikes at the surface of virion envelope. Essential for the initial attachment to heparan sulfate moieties of the host cell surface proteoglycans. Involved in fusion of viral and cellular membranes leading to virus entry into the host cell. Following initial binding to its host receptors, membrane fusion is mediated by the fusion machinery composed at least of gB and the heterodimer gH/gL. May be involved in the fusion between the virion envelope and the outer nuclear membrane during virion egress. The polypeptide is Envelope glycoprotein B (Gallus gallus (Chicken)).